The primary structure comprises 236 residues: RNA-binding protein 24 (236 aa).

Positions threonine 11–leucine 88 constitute an RRM domain. Residues glutamine 175 to glutamine 199 are necessary for interaction with EIF4E.

As to quaternary structure, interacts with EIF4E; this interaction prevents EIF4E from binding to p53/TP53 mRNA and inhibits the assembly of translation initiation complex. As to expression, expressed strongly in heart and skeletal muscles. Weakly expressed in intestine, aorta, liver, lung, kidney, uterus and bladder.

The protein localises to the nucleus. The protein resides in the cytoplasm. Multifunctional RNA-binding protein involved in the regulation of pre-mRNA splicing, mRNA stability and mRNA translation important for cell fate decision and differentiation. Plays a major role in pre-mRNA alternative splicing regulation. Mediates preferentially muscle-specific exon inclusion in numerous mRNAs important for striated cardiac and skeletal muscle cell differentiation. Binds to intronic splicing enhancer (ISE) composed of stretches of GU-rich motifs localized in flanking intron of exon that will be included by alternative splicing. Involved in embryonic stem cell (ESC) transition to cardiac cell differentiation by promoting pre-mRNA alternative splicing events of several pluripotency and/or differentiation genes. Plays a role in the regulation of mRNA stability. Binds to 3'-untranslated region (UTR) AU-rich elements in target transcripts, such as CDKN1A and MYOG, leading to maintain their stabilities. Involved in myogenic differentiation by regulating MYOG levels. Binds to multiple regions in the mRNA 3'-UTR of TP63, hence inducing its destabilization. Also promotes the destabilization of the CHRM2 mRNA via its binding to a region in the coding sequence. Plays a role in the regulation of mRNA translation. Mediates repression of p53/TP53 mRNA translation through its binding to U-rich element in the 3'-UTR, hence preventing EIF4E from binding to p53/TP53 mRNA and translation initiation. Binds to a huge amount of mRNAs. Required for embryonic heart development, sarcomer and M-band formation in striated muscles. Together with RBM20, promotes the expression of short isoforms of PDLIM5/ENH in cardiomyocytes. In Mus musculus (Mouse), this protein is RNA-binding protein 24.